We begin with the raw amino-acid sequence, 71 residues long: Conotoxin Lt11.3 (71 aa).

An N-terminal signal peptide occupies residues 1–26 (MMFRLTSVGCILLVIAFLNLVGLTNA). Intrachain disulfides connect cysteine 27-cysteine 41, cysteine 34-cysteine 46, cysteine 40-cysteine 50, and cysteine 45-cysteine 54. Residue proline 57 is modified to Proline amide. A propeptide spanning residues 61–71 (TRLQGFFKHRR) is cleaved from the precursor.

Belongs to the conotoxin I2 superfamily. As to expression, expressed by the venom duct.

Its subcellular location is the secreted. Functionally, probable neurotoxin. This chain is Conotoxin Lt11.3, found in Conus litteratus (Lettered cone).